A 370-amino-acid chain; its full sequence is Aminomethyltransferase (370 aa).

Belongs to the GcvT family. In terms of assembly, the glycine cleavage system is composed of four proteins: P, T, L and H.

The enzyme catalyses N(6)-[(R)-S(8)-aminomethyldihydrolipoyl]-L-lysyl-[protein] + (6S)-5,6,7,8-tetrahydrofolate = N(6)-[(R)-dihydrolipoyl]-L-lysyl-[protein] + (6R)-5,10-methylene-5,6,7,8-tetrahydrofolate + NH4(+). Functionally, the glycine cleavage system catalyzes the degradation of glycine. This chain is Aminomethyltransferase, found in Clostridium botulinum (strain Loch Maree / Type A3).